A 117-amino-acid polypeptide reads, in one-letter code: Protein P16 (117 aa).

A helical membrane pass occupies residues 7 to 24 (LYWVGGGLVLILIWLWFR).

Its subcellular location is the virion membrane. In terms of biological role, protein of the infection vertex complex, which increases the vertex stability. Anchors the vertex structure to the viral membrane. Essential for viral infectivity. This Enterobacteria phage PRD1 (Bacteriophage PRD1) protein is Protein P16 (XVI).